A 205-amino-acid chain; its full sequence is Recombination protein RecR (205 aa).

Residues 60–75 (CKVCHNISDTETCQIC) form a C4-type zinc finger. In terms of domain architecture, Toprim spans 83–178 (STVCVVENIR…KLSVIARGIS (96 aa)).

This sequence belongs to the RecR family.

Functionally, may play a role in DNA repair. It seems to be involved in an RecBC-independent recombinational process of DNA repair. It may act with RecF and RecO. The sequence is that of Recombination protein RecR from Bacteroides thetaiotaomicron (strain ATCC 29148 / DSM 2079 / JCM 5827 / CCUG 10774 / NCTC 10582 / VPI-5482 / E50).